A 264-amino-acid polypeptide reads, in one-letter code: ATP synthase subunit a (264 aa).

The next 6 helical transmembrane spans lie at 29 to 49 (TWHI…LWLF), 90 to 110 (IAPL…MDMI), 134 to 154 (DLNI…YYSI), 177 to 197 (IPVN…SLAL), 208 to 228 (LIFI…ALGV), and 235 to 255 (LIFH…LTIV).

This sequence belongs to the ATPase A chain family. F-type ATPases have 2 components, CF(1) - the catalytic core - and CF(0) - the membrane proton channel. CF(1) has five subunits: alpha(3), beta(3), gamma(1), delta(1), epsilon(1). CF(0) has three main subunits: a(1), b(2) and c(9-12). The alpha and beta chains form an alternating ring which encloses part of the gamma chain. CF(1) is attached to CF(0) by a central stalk formed by the gamma and epsilon chains, while a peripheral stalk is formed by the delta and b chains.

It is found in the cell inner membrane. Its function is as follows. Key component of the proton channel; it plays a direct role in the translocation of protons across the membrane. The protein is ATP synthase subunit a of Shewanella loihica (strain ATCC BAA-1088 / PV-4).